The chain runs to 237 residues: MVFSFSTFNRLVTFTVMAAIVSVRPLTAEDLSSQQQWPGTPLSRVEALAVLQTLNANLLSNASATLTLDRWCEAHRLAPPGSKIVAKHVQGHDKPANVHIRKLLHVGPNEPIVYRHVRLACGDRILSEADNWYVPARLTAEMNEVLNTTDISFGRAVRSLNFTRTNLTARLLWSPLPEGWDMSAELPVSSSGPLIPPPFLLEHHAVLKLQDGTPFSAVVESYTNNVLDFPAPLLYPQ.

A signal peptide spans 1-28 (MVFSFSTFNRLVTFTVMAAIVSVRPLTA).

This is an uncharacterized protein from Sinorhizobium fredii (strain NBRC 101917 / NGR234).